The chain runs to 118 residues: MARVKRGVIARKRHNKVLKQAKGYYGARKKIFRVAKQAVIKAGQYAYRDRRNKKRQFRRLWIARINAAARLNGMTYSRFISGLNKAGVEVDRKVLSDIAVHDAAAFSAIVEKAKAALA.

The protein belongs to the bacterial ribosomal protein bL20 family.

Binds directly to 23S ribosomal RNA and is necessary for the in vitro assembly process of the 50S ribosomal subunit. It is not involved in the protein synthesizing functions of that subunit. This is Large ribosomal subunit protein bL20 from Hydrogenovibrio crunogenus (strain DSM 25203 / XCL-2) (Thiomicrospira crunogena).